The primary structure comprises 277 residues: Caspase-3 (277 aa).

An N-acetylmethionine modification is found at Met1. 2 propeptides span residues 1 to 9 (MENTENSVD) and 10 to 28 (SKSI…QSMD). The span at 1–10 (MENTENSVDS) shows a compositional bias: polar residues. A disordered region spans residues 1–20 (MENTENSVDSKSIKNLEPKI). An N6-acetyllysine modification is found at Lys11. The segment covering 11–20 (KSIKNLEPKI) has biased composition (basic and acidic residues). Residue Ser26 is modified to Phosphoserine. Active-site residues include His121 and Cys163. An S-nitrosocysteine; in inhibited form modification is found at Cys163.

The protein belongs to the peptidase C14A family. As to quaternary structure, heterotetramer that consists of two anti-parallel arranged heterodimers, each one formed by a 17 kDa (p17) and a 12 kDa (p12) subunit. Interacts with BIRC6/bruce. In terms of processing, cleavage by granzyme B, caspase-6, caspase-8 and caspase-10 generates the two active subunits. Additional processing of the propeptides is likely due to the autocatalytic activity of the activated protease. Active heterodimers between the small subunit of caspase-7 protease and the large subunit of caspase-3 also occur and vice versa. Post-translationally, S-nitrosylated on its catalytic site cysteine in unstimulated cell lines and denitrosylated upon activation of the Fas apoptotic pathway, associated with an increase in intracellular caspase activity. Fas therefore activates caspase-3 not only by inducing the cleavage of the caspase zymogen to its active subunits, but also by stimulating the denitrosylation of its active site thiol. Ubiquitinated by BIRC6; this activity is inhibited by DIABLO/SMAC.

It is found in the cytoplasm. The catalysed reaction is Strict requirement for an Asp residue at positions P1 and P4. It has a preferred cleavage sequence of Asp-Xaa-Xaa-Asp-|- with a hydrophobic amino-acid residue at P2 and a hydrophilic amino-acid residue at P3, although Val or Ala are also accepted at this position.. Its activity is regulated as follows. Inhibited by BIRC6; following inhibition of BIRC6-caspase binding by DIABLO/SMAC, BIRC6 is subjected to caspase cleavage, leading to an increase in active caspases. Involved in the activation cascade of caspases responsible for apoptosis execution. At the onset of apoptosis, it proteolytically cleaves poly(ADP-ribose) polymerase PARP1 at a '216-Asp-|-Gly-217' bond. Cleaves and activates sterol regulatory element binding proteins (SREBPs) between the basic helix-loop-helix leucine zipper domain and the membrane attachment domain. Cleaves and activates caspase-6, -7 and -9 (CASP6, CASP7 and CASP9, respectively). Cleaves and inactivates interleukin-18 (IL18). Triggers cell adhesion in sympathetic neurons through RET cleavage. Cleaves IL-1 beta between an Asp and an Ala, releasing the mature cytokine which is involved in a variety of inflammatory processes. Cleaves and inhibits serine/threonine-protein kinase AKT1 in response to oxidative stress. Acts as an inhibitor of type I interferon production during virus-induced apoptosis by mediating cleavage of antiviral proteins CGAS, IRF3 and MAVS, thereby preventing cytokine overproduction. Also involved in pyroptosis by mediating cleavage and activation of gasdermin-E (GSDME). Cleaves XRCC4 and phospholipid scramblase proteins XKR4, XKR8 and XKR9, leading to promote phosphatidylserine exposure on apoptotic cell surface. Cleaves BIRC6 following inhibition of BIRC6-caspase binding by DIABLO/SMAC. This Pan troglodytes (Chimpanzee) protein is Caspase-3 (CASP3).